A 330-amino-acid chain; its full sequence is Ketol-acid reductoisomerase (NADP(+)) (330 aa).

One can recognise a KARI N-terminal Rossmann domain in the interval 1–181; it reads MNIYYEQDAD…GGTKAGVIET (181 aa). NADP(+) is bound by residues 24 to 27, Lys-47, Ser-50, Ser-52, and 82 to 85; these read YGSQ and DQTQ. His-107 is a catalytic residue. Gly-133 provides a ligand contact to NADP(+). The KARI C-terminal knotted domain occupies 182–327; it reads SFKDETETDL…AKLRGMMSWL (146 aa). Residues Asp-190, Glu-194, Glu-226, and Glu-230 each contribute to the Mg(2+) site. Ser-251 contacts substrate.

Belongs to the ketol-acid reductoisomerase family. Mg(2+) is required as a cofactor.

The enzyme catalyses (2R)-2,3-dihydroxy-3-methylbutanoate + NADP(+) = (2S)-2-acetolactate + NADPH + H(+). It carries out the reaction (2R,3R)-2,3-dihydroxy-3-methylpentanoate + NADP(+) = (S)-2-ethyl-2-hydroxy-3-oxobutanoate + NADPH + H(+). It participates in amino-acid biosynthesis; L-isoleucine biosynthesis; L-isoleucine from 2-oxobutanoate: step 2/4. Its pathway is amino-acid biosynthesis; L-valine biosynthesis; L-valine from pyruvate: step 2/4. Functionally, involved in the biosynthesis of branched-chain amino acids (BCAA). Catalyzes an alkyl-migration followed by a ketol-acid reduction of (S)-2-acetolactate (S2AL) to yield (R)-2,3-dihydroxy-isovalerate. In the isomerase reaction, S2AL is rearranged via a Mg-dependent methyl migration to produce 3-hydroxy-3-methyl-2-ketobutyrate (HMKB). In the reductase reaction, this 2-ketoacid undergoes a metal-dependent reduction by NADPH to yield (R)-2,3-dihydroxy-isovalerate. The polypeptide is Ketol-acid reductoisomerase (NADP(+)) (Chlorobaculum tepidum (strain ATCC 49652 / DSM 12025 / NBRC 103806 / TLS) (Chlorobium tepidum)).